Here is a 359-residue protein sequence, read N- to C-terminus: Peptide chain release factor 1 (359 aa).

Q238 carries the N5-methylglutamine modification.

It belongs to the prokaryotic/mitochondrial release factor family. Methylated by PrmC. Methylation increases the termination efficiency of RF1.

It is found in the cytoplasm. Peptide chain release factor 1 directs the termination of translation in response to the peptide chain termination codons UAG and UAA. The protein is Peptide chain release factor 1 of Rhodococcus jostii (strain RHA1).